Consider the following 80-residue polypeptide: Ubiquitin-like protein NEDD8-like protein 2 (80 aa).

Belongs to the ubiquitin family.

The sequence is that of Ubiquitin-like protein NEDD8-like protein 2 (nedd8l2) from Dictyostelium discoideum (Social amoeba).